A 128-amino-acid polypeptide reads, in one-letter code: Large ribosomal subunit protein bL12 (128 aa).

Residues 97-128 (GAPSTLKEGVSKEDAEEAKKQLTEAGATVEVK) are disordered. The span at 105–118 (GVSKEDAEEAKKQL) shows a compositional bias: basic and acidic residues.

Belongs to the bacterial ribosomal protein bL12 family. Homodimer. Part of the ribosomal stalk of the 50S ribosomal subunit. Forms a multimeric L10(L12)X complex, where L10 forms an elongated spine to which 2 to 4 L12 dimers bind in a sequential fashion. Binds GTP-bound translation factors.

Its function is as follows. Forms part of the ribosomal stalk which helps the ribosome interact with GTP-bound translation factors. Is thus essential for accurate translation. This chain is Large ribosomal subunit protein bL12, found in Lawsonia intracellularis (strain PHE/MN1-00).